We begin with the raw amino-acid sequence, 234 residues long: Thymidine kinase, cytosolic (234 aa).

At S2 the chain carries N-acetylserine. S2 and S13 each carry phosphoserine. ATP contacts are provided by residues 26–33 (GPMFSGKS), 58–60 (DTR), and 97–100 (DEGQ). E98 (proton acceptor) is an active-site residue. F128 is a substrate binding site. Zn(2+)-binding residues include C153 and C156. Residues 172–176 (VEVIG) and Y181 each bind substrate. Zn(2+)-binding residues include C185 and C188. The KEN box motif lies at 203–205 (KEN). S231 carries the post-translational modification Phosphoserine.

Belongs to the thymidine kinase family. In terms of assembly, homotetramer. Tetramerization from dimerization is induced by ATP and increases catalytic efficiency due to a high affinity for thymidine. Tetramerization is inhibited by phosphorylation at Ser-13. Interacts (via the KEN box) with FZR1. In terms of processing, phosphorylated on Ser-13 in mitosis. Phosphorylation of Ser-13 by CDK1 during mitosis reduces homotetramerization and catalytic efficiency when DNA replication is complete and intracellular TK1 is still present at a high level. Post-translationally, polyubiquitinated. Postmitosis, ubiquitination leads to proteasomal degradation. The KEN box sequence located at the C-terminal region targets for degradation by the anaphase promoting complex (APC/C) activated and rate-limited by FZR1.

Its subcellular location is the cytoplasm. It catalyses the reaction thymidine + ATP = dTMP + ADP + H(+). Cell-cycle-regulated enzyme of importance in nucleotide metabolism. Catalyzes the first enzymatic step in the salvage pathway converting thymidine into thymidine monophosphate. Transcriptional regulation limits expression to the S phase of the cell cycle and transient expression coincides with the oscillation in the intracellular dTTP concentration. Also important for the activation of anticancer and antiviral nucleoside analog prodrugs such as 1-b-d-arabinofuranosylcytosine (AraC) and 3c-azido-3c-deoxythymidine (AZT). The chain is Thymidine kinase, cytosolic from Homo sapiens (Human).